Consider the following 608-residue polypeptide: CTP synthase (608 aa).

An amidoligase domain region spans residues 1–271 (MGQAHITKHI…DAYVVRRLGL (271 aa)). Serine 18 is a CTP binding site. Serine 18 contacts UTP. Residues 19–24 (SLGKGL) and aspartate 76 contribute to the ATP site. Mg(2+) is bound by residues aspartate 76 and glutamate 145. Residues 152-154 (DIE), 192-197 (KTKPTQ), and lysine 228 contribute to the CTP site. UTP contacts are provided by residues 192-197 (KTKPTQ) and lysine 228. The Glutamine amidotransferase type-1 domain maps to 296–545 (TIAIVGKYVD…VAAAVAHADR (250 aa)). Glycine 359 contacts L-glutamine. Cysteine 386 serves as the catalytic Nucleophile; for glutamine hydrolysis. L-glutamine-binding positions include 387–390 (LGLQ), glutamate 410, and arginine 471. Catalysis depends on residues histidine 518 and glutamate 520. The tract at residues 550-608 (LPVDLPSEDAPTPENGVPENGAAQTRGVTAGRSGGSIRRGASASRPSVSSNGTAALVSP) is disordered. Residues 584-594 (GSIRRGASASR) are compositionally biased toward low complexity.

It belongs to the CTP synthase family. As to quaternary structure, homotetramer.

It carries out the reaction UTP + L-glutamine + ATP + H2O = CTP + L-glutamate + ADP + phosphate + 2 H(+). The catalysed reaction is L-glutamine + H2O = L-glutamate + NH4(+). It catalyses the reaction UTP + NH4(+) + ATP = CTP + ADP + phosphate + 2 H(+). It participates in pyrimidine metabolism; CTP biosynthesis via de novo pathway; CTP from UDP: step 2/2. Its activity is regulated as follows. Allosterically activated by GTP, when glutamine is the substrate; GTP has no effect on the reaction when ammonia is the substrate. The allosteric effector GTP functions by stabilizing the protein conformation that binds the tetrahedral intermediate(s) formed during glutamine hydrolysis. Inhibited by the product CTP, via allosteric rather than competitive inhibition. Catalyzes the ATP-dependent amination of UTP to CTP with either L-glutamine or ammonia as the source of nitrogen. Regulates intracellular CTP levels through interactions with the four ribonucleotide triphosphates. The polypeptide is CTP synthase (Frankia casuarinae (strain DSM 45818 / CECT 9043 / HFP020203 / CcI3)).